A 421-amino-acid chain; its full sequence is UDP-N-acetylglucosamine 1-carboxyvinyltransferase (421 aa).

22–23 (KN) serves as a coordination point for phosphoenolpyruvate. Residue Arg95 coordinates UDP-N-acetyl-alpha-D-glucosamine. Residue Cys119 is the Proton donor of the active site. At Cys119 the chain carries 2-(S-cysteinyl)pyruvic acid O-phosphothioketal. UDP-N-acetyl-alpha-D-glucosamine contacts are provided by residues 124–128 (RPVDQ), Asp309, and Ile331.

It belongs to the EPSP synthase family. MurA subfamily.

It localises to the cytoplasm. It carries out the reaction phosphoenolpyruvate + UDP-N-acetyl-alpha-D-glucosamine = UDP-N-acetyl-3-O-(1-carboxyvinyl)-alpha-D-glucosamine + phosphate. It functions in the pathway cell wall biogenesis; peptidoglycan biosynthesis. Its function is as follows. Cell wall formation. Adds enolpyruvyl to UDP-N-acetylglucosamine. This is UDP-N-acetylglucosamine 1-carboxyvinyltransferase from Leptothrix cholodnii (strain ATCC 51168 / LMG 8142 / SP-6) (Leptothrix discophora (strain SP-6)).